The sequence spans 186 residues: Elongation factor P (186 aa).

The protein belongs to the elongation factor P family.

It is found in the cytoplasm. Its pathway is protein biosynthesis; polypeptide chain elongation. Functionally, involved in peptide bond synthesis. Stimulates efficient translation and peptide-bond synthesis on native or reconstituted 70S ribosomes in vitro. Probably functions indirectly by altering the affinity of the ribosome for aminoacyl-tRNA, thus increasing their reactivity as acceptors for peptidyl transferase. The chain is Elongation factor P from Prochlorococcus marinus (strain MIT 9211).